The primary structure comprises 862 residues: Piwi-like protein 1 (862 aa).

A compositionally biased stretch (basic residues) spans 1–13 (MTGRARARARGRA). The disordered stretch occupies residues 1-48 (MTGRARARARGRARGQETVQHVGAAASQQPGYIPPRPQQSPTEGDLVG). The residue at position 14 (arginine 14) is an Omega-N-methylarginine; by PRMT5; alternate. Position 14 is a symmetric dimethylarginine; by PRMT5; alternate (arginine 14). Arginine 49 is subject to Omega-N-methylarginine; by PRMT5. Arginine 53 carries the omega-N-methylarginine; alternate modification. Arginine 53 is modified (symmetric dimethylarginine; alternate). Positions 218–225 (RRLLKIMN) match the D-box motif. A PAZ domain is found at 279-392 (TVLDFMFNLY…LIPELCYLTG (114 aa)). Residues 317–319 (TYR) form a required for binding 2'-O-methylated 3'-end of piRNAs region. Arginine 371 carries the omega-N-methylarginine; by PRMT5 modification. Residues 480-616 (SKETRGAPLI…LQMNCKMGGE (137 aa)) are MID region. In terms of domain architecture, Piwi spans 556–848 (IVVCLLSSNR…LAFLVGQSIH (293 aa)). Active-site residues include aspartate 633, glutamate 671, aspartate 703, and histidine 837.

It belongs to the argonaute family. Piwi subfamily. In terms of assembly, interacts (via Piwi domain) with DICER1, suggesting that it forms ribonucleoprotein RISC complexes; this interaction is regulated by HSP90AB1 activity. Interacts with MAEL, KIF17, PABPC1, PRMT5 and WDR77. Interacts (when methylated on arginine residues) with TDRD1, TDRKH/TDRD2, RNF17/TDRD4, TDRD6, TDRD7 and TDRD9. Interacts with CLOCK. Interacts with MOV10L1. Interacts with ANAPC10; interaction oly takes place following piRNA-binding. Interacts with RNF8; leading to sequester RNF8 in the cytoplasm. Interacts with Tex19.1 and, probably, Tex19.2. Requires Mg(2+) as cofactor. Post-translationally, ubiquitinated by the anaphase promoting complex/cyclosome (APC/C) in late spermatids, leading to its degradation. Ubiquitination only takes place following piRNA-binding in adult testis. Ubiquitination and degradation in late spermatogenesis by APC/C is probably required to release RNF8 from the cytoplasm and promote histone to protamine exchange by RNF8. In terms of processing, arginine methylation by PRMT5 is required for the interaction with Tudor domain-containing protein (TDRD1, TDRKH/TDRD2, RNF17/TDRD4, TDRD6, TDRD7 and TDRD9) and subsequent localization to the meiotic nuage, also named P granule. As to expression, expressed in brain. Expressed in testis, specifically in spermatocytes (at protein level). Only detected in germ lineage cells of adult testis. Expressed in male gonads 2 weeks after birth at the initiation of spermatogenesis, but not expressed in female gonads.

It localises to the cytoplasm. Functionally, endoribonuclease that plays a central role in postnatal germ cells by repressing transposable elements and preventing their mobilization, which is essential for the germline integrity. Acts via the piRNA metabolic process, which mediates the repression of transposable elements during meiosis by forming complexes composed of piRNAs and Piwi proteins and governs the methylation and subsequent repression of transposons. Directly binds methylated piRNAs, a class of 24 to 30 nucleotide RNAs that are generated by a Dicer-independent mechanism and are primarily derived from transposons and other repeated sequence elements. Strongly prefers a uridine in the first position of their guide (g1U preference, also named 1U-bias). Not involved in the piRNA amplification loop, also named ping-pong amplification cycle. Acts as an endoribonuclease that cleaves transposon messenger RNAs. Besides their function in transposable elements repression, piRNAs are probably involved in other processes during meiosis such as translation regulation. Probable component of some RISC complex, which mediates RNA cleavage and translational silencing. Also plays a role in the formation of chromatoid bodies and is required for some miRNAs stability. Required to sequester RNF8 in the cytoplasm until late spermatogenesis; RNF8 being released upon ubiquitination and degradation of PIWIL1. This is Piwi-like protein 1 from Mus musculus (Mouse).